A 364-amino-acid polypeptide reads, in one-letter code: BTB/POZ and TAZ domain-containing protein 2 (364 aa).

The BTB domain maps to 34 to 106 (SDVEIVTSDN…LYSSSLTEDE (73 aa)). The short motif at 203 to 212 (RKKRRRRHRK) is the Nuclear localization signal element. The TAZ-type zinc-finger motif lies at 215–316 (DLYMQLSEAM…PDSCRVPLCR (102 aa)). The tract at residues 327 to 350 (KMGEDTKWKLLVTRVVSAKAMTSL) is caM-binding.

In terms of assembly, interacts with CUL3A. Interacts with GTE11/BET10 through the BTB domain. Preferentially expressed in young leaves and roots.

The protein resides in the nucleus. It localises to the cytoplasm. The protein operates within protein modification; protein ubiquitination. In terms of biological role, may act as a substrate-specific adapter of an E3 ubiquitin-protein ligase complex (CUL3-RBX1-BTB) which mediates the ubiquitination and subsequent proteasomal degradation of target proteins. Plays a key role as a component of the TAC1-mediated telomerase activation pathway certainly by targeting a telomerase repressor to degradation. Seems to occupy an integral position in a complex signaling network that perceives, integrates, and responds to multiple, and sometimes competing, signals. Enhances responses to auxin in postgermination and vegetative development. Also negatively regulates ABA- and sugar-mediated inhibition of the germination. Essential for female and male gametophyte development. The sequence is that of BTB/POZ and TAZ domain-containing protein 2 (BT2) from Arabidopsis thaliana (Mouse-ear cress).